A 194-amino-acid polypeptide reads, in one-letter code: Dephospho-CoA kinase (194 aa).

The DPCK domain occupies 3–194 (TIGLTGGIGS…EQVDGFWGGL (192 aa)). ATP is bound at residue 11-16 (GSGKST).

This sequence belongs to the CoaE family.

It is found in the cytoplasm. The catalysed reaction is 3'-dephospho-CoA + ATP = ADP + CoA + H(+). The protein operates within cofactor biosynthesis; coenzyme A biosynthesis; CoA from (R)-pantothenate: step 5/5. Its function is as follows. Catalyzes the phosphorylation of the 3'-hydroxyl group of dephosphocoenzyme A to form coenzyme A. In Corynebacterium jeikeium (strain K411), this protein is Dephospho-CoA kinase.